We begin with the raw amino-acid sequence, 535 residues long: UDP-glucuronosyltransferase 1A1 (535 aa).

The first 29 residues, 1–29 (MTVVCWSSRLLLLLPYLLLCVFGPSASHA), serve as a signal peptide directing secretion. Asparagine 89, asparagine 297, and asparagine 435 each carry an N-linked (GlcNAc...) asparagine glycan. Residues 493 to 509 (VIGFLLAIVLTVVFIVF) traverse the membrane as a helical segment.

Belongs to the UDP-glycosyltransferase family. In terms of assembly, homodimers. Homooligomer. Interacts with UGT1A3, UGT1A4, UGT1A6, UGT1A7, UGT1A8, UGT1A9 and UGT1A10 to form heterodimers. In terms of tissue distribution, highly expressed in liver and at lower levels in colon, kidney, stomach and intestine.

It is found in the endoplasmic reticulum membrane. The catalysed reaction is glucuronate acceptor + UDP-alpha-D-glucuronate = acceptor beta-D-glucuronoside + UDP + H(+). The enzyme catalyses 17beta-estradiol + UDP-alpha-D-glucuronate = 17beta-estradiol 3-O-(beta-D-glucuronate) + UDP + H(+). It catalyses the reaction 2-hydroxyestrone + UDP-alpha-D-glucuronate = 2-hydroxyestrone 3-O-(beta-D-glucuronate) + UDP + H(+). It carries out the reaction 2-hydroxy-17beta-estradiol + UDP-alpha-D-glucuronate = 2-hydroxy-17beta-estradiol 3-O-(beta-D-glucuronate) + UDP + H(+). The catalysed reaction is 2-methoxy-17beta-estradiol + UDP-alpha-D-glucuronate = 2-methoxy-17beta-estradiol 3-O-(beta-D-glucuronate) + UDP + H(+). The enzyme catalyses 17alpha-estradiol + UDP-alpha-D-glucuronate = 17alpha-estradiol 3-O-(beta-D-glucuronate) + UDP + H(+). It catalyses the reaction 16beta,17beta-estriol + UDP-alpha-D-glucuronate = 16beta,17beta-estriol 16-O-(beta-D-glucuronate) + UDP + H(+). It carries out the reaction losartan + UDP-alpha-D-glucuronate = losartan-2-N-beta-D-glucuronide + UDP. The catalysed reaction is prunetin + UDP-alpha-D-glucuronate = prunetin-4'-O-beta-D-glucuronide + UDP. The enzyme catalyses SN-38 + UDP-alpha-D-glucuronate = SN-38 O-beta-D-glucuronide + UDP + H(+). It catalyses the reaction (4Z,15Z)-bilirubin IXalpha + UDP-alpha-D-glucuronate = (4Z,15Z)-bilirubin IXalpha C12-beta-D-glucuronoside + UDP. It carries out the reaction (4Z,15Z)-bilirubin IXalpha + UDP-alpha-D-glucuronate = (4Z,15Z)-bilirubin IXalpha C8-beta-D-glucuronoside + UDP. The catalysed reaction is (4Z,15Z)-bilirubin IXalpha C8-beta-D-glucuronoside + UDP-alpha-D-glucuronate = (4Z,15Z)-bilirubin IXalpha C8,C12-beta-D-bisglucuronoside + UDP. The enzyme catalyses (4Z,15Z)-bilirubin IXalpha C12-beta-D-glucuronoside + UDP-alpha-D-glucuronate = (4Z,15Z)-bilirubin IXalpha C8,C12-beta-D-bisglucuronoside + UDP. It catalyses the reaction 8-iso-prostaglandin F2alpha + UDP-alpha-D-glucuronate = 8-iso-prostaglandin F2alpha-glucuronide + UDP + H(+). It carries out the reaction (5Z,8Z,11Z,14Z)-eicosatetraenoate + UDP-alpha-D-glucuronate = O-[(5Z),(8Z),(11Z),(14Z)-eicosatetraenoyl]-beta-D-glucuronate + UDP. The catalysed reaction is 15-hydroxy-(5Z,8Z,11Z,13E)-eicosatetraenoate + UDP-alpha-D-glucuronate = 15-O-(beta-D-glucuronosyl)-(5Z,8Z,11Z,14Z)-eicosatetraenoate + UDP + H(+). The enzyme catalyses 20-hydroxy-(5Z,8Z,11Z,14Z)-eicosatetraenoate + UDP-alpha-D-glucuronate = 20-O-(beta-D-glucuronosyl)-(5Z,8Z,11Z,14Z)-eicosatetraenoate + UDP + H(+). It catalyses the reaction prostaglandin B1 + UDP-alpha-D-glucuronate = 15-O-(beta-D-glucuronosyl)-prostaglandin B1 + UDP + H(+). It carries out the reaction (E)-ferulate + UDP-alpha-D-glucuronate = (E)-4-O-(beta-D-glucuronosyl)-ferulate + UDP + H(+). The catalysed reaction is (E)-ferulate + UDP-alpha-D-glucuronate = (E)-ferulic acid beta-D-glucuronate ester + UDP. UDP-glucuronosyltransferase (UGT) that catalyzes phase II biotransformation reactions in which lipophilic substrates are conjugated with glucuronic acid to increase the metabolite's water solubility, thereby facilitating excretion into either the urine or bile. Essential for the elimination and detoxification of drugs, xenobiotics and endogenous compounds. Catalyzes the glucuronidation of endogenous estrogen hormones such as estradiol, estrone and estriol. Involved in the glucuronidation of bilirubin, a degradation product occurring in the normal catabolic pathway that breaks down heme in vertebrates. Involved in the glucuronidation of arachidonic acid (AA) and AA-derived eicosanoids including 15-HETE, 20-HETE, PGB1 and F2-isoprostane (8-iso-PGF2alpha). Involved in the glucuronidation of the phytochemical ferulic acid at the phenolic or the carboxylic acid group. Also catalyzes the glucuronidation the isoflavones genistein, daidzein, glycitein, formononetin, biochanin A and prunetin, which are phytoestrogens with anticancer and cardiovascular properties. Involved in the glucuronidation of the AGTR1 angiotensin receptor antagonist losartan, a drug which can inhibit the effect of angiotensin II. Involved in the biotransformation of 7-ethyl-10-hydroxycamptothecin (SN-38), the pharmacologically active metabolite of the anticancer drug irinotecan. This chain is UDP-glucuronosyltransferase 1A1, found in Mus musculus (Mouse).